The following is a 241-amino-acid chain: Ribosomal RNA small subunit methyltransferase J (241 aa).

S-adenosyl-L-methionine is bound by residues 94–95 (RD) and aspartate 163.

Belongs to the methyltransferase superfamily. RsmJ family.

It is found in the cytoplasm. It catalyses the reaction guanosine(1516) in 16S rRNA + S-adenosyl-L-methionine = N(2)-methylguanosine(1516) in 16S rRNA + S-adenosyl-L-homocysteine + H(+). In terms of biological role, specifically methylates the guanosine in position 1516 of 16S rRNA. The sequence is that of Ribosomal RNA small subunit methyltransferase J from Francisella tularensis subsp. novicida (strain U112).